The primary structure comprises 245 residues: 2,3,4,5-tetrahydropyridine-2,6-dicarboxylate N-acetyltransferase (245 aa).

Belongs to the transferase hexapeptide repeat family. DapH subfamily.

The enzyme catalyses (S)-2,3,4,5-tetrahydrodipicolinate + acetyl-CoA + H2O = L-2-acetamido-6-oxoheptanedioate + CoA. It participates in amino-acid biosynthesis; L-lysine biosynthesis via DAP pathway; LL-2,6-diaminopimelate from (S)-tetrahydrodipicolinate (acetylase route): step 1/3. In terms of biological role, catalyzes the transfer of an acetyl group from acetyl-CoA to tetrahydrodipicolinate. This Methanopyrus kandleri (strain AV19 / DSM 6324 / JCM 9639 / NBRC 100938) protein is 2,3,4,5-tetrahydropyridine-2,6-dicarboxylate N-acetyltransferase.